A 614-amino-acid polypeptide reads, in one-letter code: Zinc metalloproteinase-disintegrin-like HR1b (614 aa).

A signal peptide spans 1–20 (MIQVLLVTICLAVFPYQGSS). The propeptide occupies 21-191 (IILESGNVND…KASKLVVTAE (171 aa)). Pyrrolidone carboxylic acid is present on Gln-192. In terms of domain architecture, Peptidase M12B spans 198 to 394 (RYIKLAIVVD…HKPQCILNAP (197 aa)). The N-linked (GlcNAc...) asparagine glycan is linked to Asn-264. Intrachain disulfides connect Cys-309–Cys-389, Cys-349–Cys-373, and Cys-351–Cys-356. His-334 contacts Zn(2+). The active site involves Glu-335. Zn(2+) is bound by residues His-338 and His-344. Residue Asn-372 is glycosylated (N-linked (GlcNAc...) asparagine). A propeptide spanning residues 395 to 398 (SKTD) is cleaved from the precursor. The Disintegrin domain maps to 402-488 (PPVCGNELLE…DCPTDRFHRN (87 aa)). Residues Val-404, Asn-407, Leu-409, Glu-411, Glu-414, and Asp-417 each coordinate Ca(2+). Intrachain disulfides connect Cys-405–Cys-424, Cys-405–Cys-434, Cys-416–Cys-429, Cys-416–Cys-434, Cys-418–Cys-424, Cys-428–Cys-451, Cys-442–Cys-448, Cys-447–Cys-473, Cys-460–Cys-480, Cys-467–Cys-492, Cys-467–Cys-499, Cys-492–Cys-504, Cys-499–Cys-504, Cys-511–Cys-526, Cys-511–Cys-561, Cys-526–Cys-568, Cys-539–Cys-549, Cys-549–Cys-556, Cys-556–Cys-593, Cys-561–Cys-568, Cys-587–Cys-598, and Cys-593–Cys-598. Positions 466–468 (ECD) match the D/ECD-tripeptide motif. N-linked (GlcNAc...) asparagine glycosylation is present at Asn-518. The N-linked (GlcNAc...) asparagine glycan is linked to Asn-571. A propeptide spanning residues 608 to 614 (TTVFSLI) is cleaved from the precursor.

It belongs to the venom metalloproteinase (M12B) family. P-III subfamily. P-IIIb sub-subfamily. Monomer. Zn(2+) is required as a cofactor. As to expression, expressed by the venom gland.

Its subcellular location is the secreted. Zinc protease that induces hemorrhage. Has preference for Tyr, Leu, Arg, Met, and Phe at the P1 position, in descending order (in vitro). Shows equal preference for the sequences of Ala-Asp and Arg-Ile at the P3-P2 position with different enzyme cleavage sites across the P1 position: the N-terminus side for Ala-Asp and the C-terminus side for Arg-Ile. Its function is as follows. Inhibits platelet aggregation induced by ADP, thrombin, platelet-activating factor and collagen. Acts by inhibiting fibrinogen interaction with platelet receptors alpha-IIb/beta-3 (ITGA2B/ITGB3). In Protobothrops flavoviridis (Habu), this protein is Zinc metalloproteinase-disintegrin-like HR1b.